The following is an 838-amino-acid chain: DNA gyrase subunit A (838 aa).

Residues 41-510 (LPEVRDGLKP…ADGDVSDEDL (470 aa)) enclose the Topo IIA-type catalytic domain. Y129 acts as the O-(5'-phospho-DNA)-tyrosine intermediate in catalysis. The short motif at 537-543 (QKRGGKG) is the GyrA-box element.

It belongs to the type II topoisomerase GyrA/ParC subunit family. In terms of assembly, heterotetramer, composed of two GyrA and two GyrB chains. In the heterotetramer, GyrA contains the active site tyrosine that forms a transient covalent intermediate with DNA, while GyrB binds cofactors and catalyzes ATP hydrolysis. The cofactor is Mg(2+).

Its subcellular location is the cytoplasm. The enzyme catalyses ATP-dependent breakage, passage and rejoining of double-stranded DNA.. DNA supercoiling is inhibited by EDTA, novobiocin, coumermycin and ciprofloxacin. Functionally, a type II topoisomerase that negatively supercoils closed circular double-stranded (ds) DNA in an ATP-dependent manner to modulate DNA topology and maintain chromosomes in an underwound state. Also catalyzes the interconversion of other topological isomers of double-stranded DNA rings, including catenanes and knotted rings. Relaxes negatively supercoiled DNA in an ATP-independent manner. A linear reaction intermediate can be trapped in the presence of the antibiotic ciprofloxacin. Negative supercoiling favors strand separation, and DNA replication, transcription, recombination and repair, all of which involve strand separation. Type II topoisomerases break and join 2 DNA strands simultaneously in an ATP-dependent manner. The sequence is that of DNA gyrase subunit A from Mycobacterium bovis (strain BCG / Pasteur 1173P2).